Consider the following 260-residue polypeptide: Small ribosomal subunit protein eS1 (260 aa).

The segment covering 1-18 (MAVGKNKRISKGKKGGKK) has biased composition (basic residues). A disordered region spans residues 1-22 (MAVGKNKRISKGKKGGKKKAAD).

This sequence belongs to the eukaryotic ribosomal protein eS1 family. Component of the small ribosomal subunit. Mature ribosomes consist of a small (40S) and a large (60S) subunit. The 40S subunit contains about 33 different proteins and 1 molecule of RNA (18S). The 60S subunit contains about 49 different proteins and 3 molecules of RNA (25S, 5.8S and 5S).

The protein localises to the cytoplasm. The sequence is that of Small ribosomal subunit protein eS1 from Helianthus annuus (Common sunflower).